We begin with the raw amino-acid sequence, 244 residues long: MSQPLLALNWKMNKTPSEARAWAADLSSALTPGNAELAVLAPAIDLPVLAGALPAGVALGGQDVSRFAAGAYTGEISAAMLRDVGATYVIVGHSERRTYHAETDAVVAAKARQAQAAGLIPIVCVGESLDVRERGAQVDFTLDQLRGSTEGVGENLIVAYEPVWAIGTGKTATADDAEELAAAIREALAGLYTAEARSFRILYGGSVKPDNIASICAQPNVNGALVGGASLNVADVVAMSDALR.

Residue 9-11 coordinates substrate; the sequence is NWK. The active-site Electrophile is the histidine 93. Residue glutamate 161 is the Proton acceptor of the active site. Substrate-binding positions include glycine 167, serine 206, and 227-228; that span reads GG.

It belongs to the triosephosphate isomerase family. In terms of assembly, homodimer.

Its subcellular location is the cytoplasm. It catalyses the reaction D-glyceraldehyde 3-phosphate = dihydroxyacetone phosphate. The protein operates within carbohydrate biosynthesis; gluconeogenesis. It functions in the pathway carbohydrate degradation; glycolysis; D-glyceraldehyde 3-phosphate from glycerone phosphate: step 1/1. Involved in the gluconeogenesis. Catalyzes stereospecifically the conversion of dihydroxyacetone phosphate (DHAP) to D-glyceraldehyde-3-phosphate (G3P). This is Triosephosphate isomerase from Deinococcus geothermalis (strain DSM 11300 / CIP 105573 / AG-3a).